Consider the following 429-residue polypeptide: Phosphoribosylamine--glycine ligase (429 aa).

In terms of domain architecture, ATP-grasp spans lysine 109–alanine 316. Valine 135–serine 196 lines the ATP pocket. Glutamate 286 and asparagine 288 together coordinate Mg(2+).

The protein belongs to the GARS family. Mg(2+) serves as cofactor. The cofactor is Mn(2+).

The catalysed reaction is 5-phospho-beta-D-ribosylamine + glycine + ATP = N(1)-(5-phospho-beta-D-ribosyl)glycinamide + ADP + phosphate + H(+). Its pathway is purine metabolism; IMP biosynthesis via de novo pathway; N(1)-(5-phospho-D-ribosyl)glycinamide from 5-phospho-alpha-D-ribose 1-diphosphate: step 2/2. The polypeptide is Phosphoribosylamine--glycine ligase (Vibrio cholerae serotype O1 (strain ATCC 39315 / El Tor Inaba N16961)).